Consider the following 186-residue polypeptide: Methylamine dehydrogenase light chain (186 aa).

A signal peptide (tat-type signal) is located at residues 1 to 57; sequence MKKNTGFDSGIEKLARKTASKTGRRSFIGKLGGFLVGSALLPLLPVDRRGRMNEAHA. Intrachain disulfides connect Cys-78–Cys-143, Cys-84–Cys-116, Cys-91–Cys-176, Cys-93–Cys-141, Cys-101–Cys-132, and Cys-133–Cys-164. The residue at position 112 (Trp-112) is a Tryptophylquinone. The segment at residues 112–163 is a cross-link (tryptophan tryptophylquinone (Trp-Trp)); sequence WVASCFNPGDGQTYLIAYRDCCGKQTCGRCNCVNVQGELPVYRPEFNNDIVW.

Belongs to the aromatic amine dehydrogenase light chain family. In terms of assembly, heterotetramer of two light and two heavy chains. The cofactor is tryptophan tryptophylquinone residue. Predicted to be exported by the Tat system. The position of the signal peptide cleavage has not been experimentally proven. In terms of processing, tryptophan tryptophylquinone (TTQ) is formed by oxidation of the indole ring of a tryptophan to form tryptophylquinone followed by covalent cross-linking with another tryptophan residue.

Its subcellular location is the periplasm. The enzyme catalyses 2 oxidized [amicyanin] + methylamine + H2O = 2 reduced [amicyanin] + formaldehyde + NH4(+) + 2 H(+). The protein operates within one-carbon metabolism; methylamine degradation; formaldehyde from methylamine: step 1/1. Methylamine dehydrogenase carries out the oxidation of methylamine. Electrons are passed from methylamine dehydrogenase to amicyanin. In Methylobacillus flagellatus (strain ATCC 51484 / DSM 6875 / VKM B-1610 / KT), this protein is Methylamine dehydrogenase light chain (mauA).